The primary structure comprises 472 residues: MKFLSEDFLLNNESAKLLFHEHAEKMPIIDYHCHLEPAEIYENKKYENLTQIWLGGDHYKWRLLRANGIPEKLITGDGDDYEKFLAFAKTLEKSLGNPIYEWTHLELKRFFHIDKLISSETEKEIWDEANQMLATDDFRPRALIKNSNVKVVCTTDDPVSKLSYHKSLAKEEKDFKVLPALRPDHLISITDGHFAEYLMELSAVSGIKIKDFKTMIKALEQRFEFFTSLGGRLSDHSLSTYTFAETKNVDLDSILQKAKENQTLTDLEYNQYITALILEIMKLNKKFDWTMQLHVNVNRSINGPALRKIGENTGFDSMGTQANISEELTKLFSKAAELEIIPKTILYSLNQNDWLELATLIGCFQGEGVQQLQLGAGWWFNDTAKGMEKQLEIFASQSLLPNFVGMLTDSRSFLSYPRHEYFRRVLCNFVGQLIESGRIPDDEALVGKMIEDISYNNVHDYFGFFKNEDSKQ.

Belongs to the metallo-dependent hydrolases superfamily. Uronate isomerase family.

The enzyme catalyses D-glucuronate = D-fructuronate. The catalysed reaction is aldehydo-D-galacturonate = keto-D-tagaturonate. It functions in the pathway carbohydrate metabolism; pentose and glucuronate interconversion. This chain is Uronate isomerase, found in Lactococcus lactis subsp. cremoris (strain MG1363).